We begin with the raw amino-acid sequence, 342 residues long: Holliday junction branch migration complex subunit RuvB (342 aa).

A large ATPase domain (RuvB-L) region spans residues 1–179; it reads MTNILSPEKS…FGIPMRLNFY (179 aa). ATP-binding positions include I18, R19, G60, K63, T64, T65, 126–128, R169, Y179, and R216; that span reads EDF. T64 serves as a coordination point for Mg(2+). The interval 180-250 is small ATPAse domain (RuvB-S); the sequence is NTEELKKVLN…ISDFGLKRLE (71 aa). A head domain (RuvB-H) region spans residues 253–342; sequence RIGLDSNDYR…HQFNIFNENE (90 aa). DNA contacts are provided by R289, R308, and R313.

This sequence belongs to the RuvB family. In terms of assembly, homohexamer. Forms an RuvA(8)-RuvB(12)-Holliday junction (HJ) complex. HJ DNA is sandwiched between 2 RuvA tetramers; dsDNA enters through RuvA and exits via RuvB. An RuvB hexamer assembles on each DNA strand where it exits the tetramer. Each RuvB hexamer is contacted by two RuvA subunits (via domain III) on 2 adjacent RuvB subunits; this complex drives branch migration. In the full resolvosome a probable DNA-RuvA(4)-RuvB(12)-RuvC(2) complex forms which resolves the HJ.

Its subcellular location is the cytoplasm. The enzyme catalyses ATP + H2O = ADP + phosphate + H(+). In terms of biological role, the RuvA-RuvB-RuvC complex processes Holliday junction (HJ) DNA during genetic recombination and DNA repair, while the RuvA-RuvB complex plays an important role in the rescue of blocked DNA replication forks via replication fork reversal (RFR). RuvA specifically binds to HJ cruciform DNA, conferring on it an open structure. The RuvB hexamer acts as an ATP-dependent pump, pulling dsDNA into and through the RuvAB complex. RuvB forms 2 homohexamers on either side of HJ DNA bound by 1 or 2 RuvA tetramers; 4 subunits per hexamer contact DNA at a time. Coordinated motions by a converter formed by DNA-disengaged RuvB subunits stimulates ATP hydrolysis and nucleotide exchange. Immobilization of the converter enables RuvB to convert the ATP-contained energy into a lever motion, pulling 2 nucleotides of DNA out of the RuvA tetramer per ATP hydrolyzed, thus driving DNA branch migration. The RuvB motors rotate together with the DNA substrate, which together with the progressing nucleotide cycle form the mechanistic basis for DNA recombination by continuous HJ branch migration. Branch migration allows RuvC to scan DNA until it finds its consensus sequence, where it cleaves and resolves cruciform DNA. In Rickettsia peacockii (strain Rustic), this protein is Holliday junction branch migration complex subunit RuvB.